The chain runs to 454 residues: Bifunctional protein GlmU (454 aa).

The pyrophosphorylase stretch occupies residues 1–227 (MSKLSVVILA…MMEVEGANNR (227 aa)). Residues 9 to 12 (LAAG), lysine 23, glutamine 74, 79 to 80 (GT), 101 to 103 (YGD), glycine 138, glutamate 152, asparagine 167, and asparagine 225 contribute to the UDP-N-acetyl-alpha-D-glucosamine site. Mg(2+) is bound at residue aspartate 103. Residue asparagine 225 coordinates Mg(2+). Residues 228 to 248 (LQLAALERYFQRKQATALLLA) are linker. Residues 249-454 (GVSLADPERF…ADWERPSKKK (206 aa)) form an N-acetyltransferase region. The UDP-N-acetyl-alpha-D-glucosamine site is built by arginine 331 and lysine 349. The active-site Proton acceptor is histidine 361. Tyrosine 364 and asparagine 375 together coordinate UDP-N-acetyl-alpha-D-glucosamine. Residues alanine 378, 384 to 385 (NY), serine 403, alanine 421, and arginine 438 contribute to the acetyl-CoA site.

In the N-terminal section; belongs to the N-acetylglucosamine-1-phosphate uridyltransferase family. This sequence in the C-terminal section; belongs to the transferase hexapeptide repeat family. In terms of assembly, homotrimer. It depends on Mg(2+) as a cofactor.

The protein resides in the cytoplasm. It carries out the reaction alpha-D-glucosamine 1-phosphate + acetyl-CoA = N-acetyl-alpha-D-glucosamine 1-phosphate + CoA + H(+). The enzyme catalyses N-acetyl-alpha-D-glucosamine 1-phosphate + UTP + H(+) = UDP-N-acetyl-alpha-D-glucosamine + diphosphate. The protein operates within nucleotide-sugar biosynthesis; UDP-N-acetyl-alpha-D-glucosamine biosynthesis; N-acetyl-alpha-D-glucosamine 1-phosphate from alpha-D-glucosamine 6-phosphate (route II): step 2/2. It participates in nucleotide-sugar biosynthesis; UDP-N-acetyl-alpha-D-glucosamine biosynthesis; UDP-N-acetyl-alpha-D-glucosamine from N-acetyl-alpha-D-glucosamine 1-phosphate: step 1/1. It functions in the pathway bacterial outer membrane biogenesis; LPS lipid A biosynthesis. Its function is as follows. Catalyzes the last two sequential reactions in the de novo biosynthetic pathway for UDP-N-acetylglucosamine (UDP-GlcNAc). The C-terminal domain catalyzes the transfer of acetyl group from acetyl coenzyme A to glucosamine-1-phosphate (GlcN-1-P) to produce N-acetylglucosamine-1-phosphate (GlcNAc-1-P), which is converted into UDP-GlcNAc by the transfer of uridine 5-monophosphate (from uridine 5-triphosphate), a reaction catalyzed by the N-terminal domain. This chain is Bifunctional protein GlmU, found in Actinobacillus succinogenes (strain ATCC 55618 / DSM 22257 / CCUG 43843 / 130Z).